A 1054-amino-acid polypeptide reads, in one-letter code: Leucine-rich repeats and immunoglobulin-like domains protein 2 (1054 aa).

An N-terminal signal peptide occupies residues 1-39 (MAAAPRGIWEQRRLGCGLGPLARLLILAQALRLLPAARA). Residues 40–74 (GLCPAPCACRLPLLDCSRRKLPAPSWRALSGPLPS) form the LRRNT domain. 15 LRR repeats span residues 75-96 (DISS…LESQ), 97-118 (TLQE…GEPT), 120-141 (NITL…AFEL), 144-165 (ALES…SFPR), 167-188 (SLKY…CFDN), 192-213 (SLLV…VFKL), 215-236 (HLQF…TFQG), 239-260 (SLRS…AFFG), 263-284 (NMEE…WLYG), 287-308 (MLQQ…AWEF), 311-332 (RLSE…AFVG), 335-356 (LLER…VFRF), 359-381 (NLQT…SEAF), 386-407 (SLTK…AFIG), and 410-431 (SLEY…AFSQ). N-linked (GlcNAc...) asparagine glycosylation occurs at N90. A glycan (N-linked (GlcNAc...) asparagine) is linked at N120. 2 N-linked (GlcNAc...) asparagine glycosylation sites follow: N172 and N188. N273 is a glycosylation site (N-linked (GlcNAc...) asparagine). N-linked (GlcNAc...) asparagine glycosylation is found at N440, N467, N513, N570, and N588. Positions 442-493 (SSLLCDCHLKWLLQWLVDNNFHHSVNVSCAHPEWLAGQSILNVDLKDFVCDD) constitute an LRRCT domain. 3 Ig-like C2-type domains span residues 497 to 596 (PQIR…AKLT), 601 to 690 (PSFL…ASLT), and 695 to 784 (PSFI…NVIS). Cysteines 518 and 579 form a disulfide. Residues C622 and C674 are joined by a disulfide bond. 2 N-linked (GlcNAc...) asparagine glycosylation sites follow: N686 and N727. C716 and C765 are joined by a disulfide. The helical transmembrane segment at 807 to 827 (IVIIVVVCCVVGTSLIWVIVI) threads the bilayer. Position 905 is a phosphotyrosine (Y905). The N-linked (GlcNAc...) asparagine glycan is linked to N1024.

Its subcellular location is the cell membrane. The protein resides in the cytoplasm. The protein is Leucine-rich repeats and immunoglobulin-like domains protein 2 (Lrig2) of Mus musculus (Mouse).